The primary structure comprises 161 residues: RNA pyrophosphohydrolase (161 aa).

One can recognise a Nudix hydrolase domain in the interval 12 to 154 (PYRPGVGMMI…KRKLYQAVVK (143 aa)). The Nudix box signature appears at 46 to 67 (GGIVPGETPSIAAMREMLEEIG).

This sequence belongs to the Nudix hydrolase family. RppH subfamily. It depends on a divalent metal cation as a cofactor.

In terms of biological role, accelerates the degradation of transcripts by removing pyrophosphate from the 5'-end of triphosphorylated RNA, leading to a more labile monophosphorylated state that can stimulate subsequent ribonuclease cleavage. The chain is RNA pyrophosphohydrolase from Rickettsia canadensis (strain McKiel).